Consider the following 138-residue polypeptide: Mini-ribonuclease 3 (138 aa).

The active site involves D33.

The protein belongs to the MrnC RNase family. Homodimer. It depends on Mg(2+) as a cofactor.

It is found in the cytoplasm. Its function is as follows. Involved in correct processing of both the 5' and 3' ends of 23S rRNA precursor. Processes 30S rRNA precursor transcript even in absence of ribonuclease 3 (Rnc); Rnc processes 30S rRNA into smaller rRNA precursors. The chain is Mini-ribonuclease 3 from Synechococcus sp. (strain ATCC 27144 / PCC 6301 / SAUG 1402/1) (Anacystis nidulans).